Here is a 443-residue protein sequence, read N- to C-terminus: Chromosomal replication initiator protein DnaA (443 aa).

Residues 1–80 form a domain I, interacts with DnaA modulators region; it reads MTSQFASLWQ…LGESVEVRFF (80 aa). The tract at residues 80–104 is domain II; sequence FTPSADSRRSEPSRRPVATEESSPP. Residues 83–105 are disordered; that stretch reads SADSRRSEPSRRPVATEESSPPL. Over residues 85–97 the composition is skewed to basic and acidic residues; the sequence is DSRRSEPSRRPVA. The tract at residues 105 to 321 is domain III, AAA+ region; the sequence is LLNPKYTFDT…GALNRVIAYA (217 aa). ATP contacts are provided by Gly-149, Gly-151, Lys-152, and Thr-153. A domain IV, binds dsDNA region spans residues 322–443; that stretch reads NLSGKSLTSE…QVLKEKIQRA (122 aa).

This sequence belongs to the DnaA family. As to quaternary structure, oligomerizes as a right-handed, spiral filament on DNA at oriC.

The protein resides in the cytoplasm. Functionally, plays an essential role in the initiation and regulation of chromosomal replication. ATP-DnaA binds to the origin of replication (oriC) to initiate formation of the DNA replication initiation complex once per cell cycle. Binds the DnaA box (a 9 base pair repeat at the origin) and separates the double-stranded (ds)DNA. Forms a right-handed helical filament on oriC DNA; dsDNA binds to the exterior of the filament while single-stranded (ss)DNA is stabiized in the filament's interior. The ATP-DnaA-oriC complex binds and stabilizes one strand of the AT-rich DNA unwinding element (DUE), permitting loading of DNA polymerase. After initiation quickly degrades to an ADP-DnaA complex that is not apt for DNA replication. Binds acidic phospholipids. The sequence is that of Chromosomal replication initiator protein DnaA from Heliobacterium modesticaldum (strain ATCC 51547 / Ice1).